Reading from the N-terminus, the 266-residue chain is MTNIVVLIKQVPDTWSERKLTDGDFTLDREAADAVLDEINERAVEEALQIREKEAADGIEGSVTVLTAGPERATEAIRKALSMGADKAVHLKDDGMHGSDVIQTGWALARALGTIEGTELVIAGNESTDGVGGAVPAIIAEYLGLPQLTHLRKVSIEGGKITGERETDEGVFTLEATLPAVISVNEKINEPRFPSFKGIMAAKKKEVTVLTLAEIGVESDEVGLANAGSTVLASTPKPAKTAGEKVTDEGEGGNQIVQYLVAQKII.

The protein belongs to the ETF beta-subunit/FixA family. In terms of assembly, heterodimer of an alpha and a beta subunit. Requires FAD as cofactor. The cofactor is AMP.

Functionally, the electron transfer flavoprotein serves as a specific electron acceptor for other dehydrogenases. It transfers the electrons to the main respiratory chain via ETF-ubiquinone oxidoreductase (ETF dehydrogenase). This Mycobacterium bovis (strain ATCC BAA-935 / AF2122/97) protein is Electron transfer flavoprotein subunit beta (etfB).